The primary structure comprises 332 residues: DNA-directed RNA polymerase subunit alpha (332 aa).

Positions 1-231 (MQTNLLKPKT…EQLAVFAQLD (231 aa)) are alpha N-terminal domain (alpha-NTD). An alpha C-terminal domain (alpha-CTD) region spans residues 252 to 332 (FDPILLRPVD…NWPPAGLEKR (81 aa)).

The protein belongs to the RNA polymerase alpha chain family. As to quaternary structure, homodimer. The RNAP catalytic core consists of 2 alpha, 1 beta, 1 beta' and 1 omega subunit. When a sigma factor is associated with the core the holoenzyme is formed, which can initiate transcription.

It catalyses the reaction RNA(n) + a ribonucleoside 5'-triphosphate = RNA(n+1) + diphosphate. DNA-dependent RNA polymerase catalyzes the transcription of DNA into RNA using the four ribonucleoside triphosphates as substrates. This Delftia acidovorans (strain DSM 14801 / SPH-1) protein is DNA-directed RNA polymerase subunit alpha.